The sequence spans 2382 residues: Nonribosomal peptide synthetase chyA (2382 aa).

The adenylation 1 stretch occupies residues 204-607 (QKCATQPESI…LGRKDHQVKI (404 aa)). The Carrier 1 domain maps to 745–821 (TPTTQNQRIL…DMASVLVKDH (77 aa)). At Ser-782 the chain carries O-(pantetheine 4'-phosphoryl)serine. Positions 857–1269 (EDVYPCTHMQ…LVPPEDMATL (413 aa)) are condensation 1. The segment at 1294–1687 (GQPDTLAIHS…VGRKDDQVKL (394 aa)) is adenylation 2. The Carrier 2 domain maps to 1833–1909 (VPVSIHGRKV…GLSLKCATEN (77 aa)). The residue at position 1870 (Ser-1870) is an O-(pantetheine 4'-phosphoryl)serine. The tract at residues 1967–2373 (MTLHNFYSRY…FSDVIESLAS (407 aa)) is condensation 2.

Belongs to the NRP synthetase family.

It functions in the pathway pigment biosynthesis. In terms of biological role, nonribosomal peptide synthetase; part of the gene cluster that mediates the biosynthesis of the yellow pigment chrysogine. the NRPS chyA mediates the condensation of anthranilic acid and alanine into the intermediate 2-(2-aminopropanamido)benzoic acid. The remainder of the pathway is highly branched yielding at least 13 chrysogine-related compounds. The malonyl transferase chyE converts 2-(2-aminopropanamido)benzoic acid and 2-(2-aminopropanamido)benzamidine into 2-(2-(2-carboxyacetamido)propanamido)benzoic acid and 3-((1-((2-carbamoylphenyl)amino)-1-oxopropan-2-yl)amino)-3-oxopropanoic acid, respectively. ChyD is an amidase, being responsible for the amidation of the carboxylic acid moiety of 2-(2-aminopropanamido)benzoic acid, 2-(2-(2-carboxyacetamido)propanamido)benzoic acid and 2-(2-((4-amino-1-carboxy-4-oxobutyl)amino)propanamido)benzoic acid. ChyC is involved in the same reactions as ChyD, but plays a more minor role in the amidation reactions compared to chyD. The oxidoreductases chyH and chyM are involved in oxidation reactions that form N-pyruvoylanthranilamide from 2-(2-aminopropanamido)benzamidine and (1-((2-carbamoylphenyl)amino)-1-oxopropan-2-yl)glutamine, respectively. N-pyruvoylanthranilamide is further converted via two further branches in the pathway, yielding chrysogine and additional chrysogine-related coumpounds. Chrysogine is likely formed by a spontaneous ring closure from N-pyruvoylanthranilamide. The chain is Nonribosomal peptide synthetase chyA from Penicillium rubens (strain ATCC 28089 / DSM 1075 / NRRL 1951 / Wisconsin 54-1255) (Penicillium chrysogenum).